The following is a 368-amino-acid chain: uncharacterized protein (368 aa).

Residues 3–120 (KILLADDERI…QIISSLEEII (118 aa)) enclose the Response regulatory domain. At aspartate 55 the chain carries 4-aspartylphosphate. An HTH araC/xylS-type domain is found at 259-361 (SKMIRLIADE…GLTPSEFRRK (103 aa)). DNA-binding regions (H-T-H motif) lie at residues 278–299 (WAAK…KQET) and 327–351 (VSEI…KKYT).

Phosphorylated by YesM.

The protein localises to the cytoplasm. Member of the two-component regulatory system YesM/YesN. This is an uncharacterized protein from Bacillus subtilis (strain 168).